We begin with the raw amino-acid sequence, 610 residues long: Elongation factor 4 (610 aa).

Residues 14–196 (NRIRNFSIIA…ALVANIPPPK (183 aa)) enclose the tr-type G domain. Residues 26–31 (DHGKST) and 143–146 (NKID) each bind GTP.

Belongs to the TRAFAC class translation factor GTPase superfamily. Classic translation factor GTPase family. LepA subfamily.

It is found in the cell inner membrane. It catalyses the reaction GTP + H2O = GDP + phosphate + H(+). In terms of biological role, required for accurate and efficient protein synthesis under certain stress conditions. May act as a fidelity factor of the translation reaction, by catalyzing a one-codon backward translocation of tRNAs on improperly translocated ribosomes. Back-translocation proceeds from a post-translocation (POST) complex to a pre-translocation (PRE) complex, thus giving elongation factor G a second chance to translocate the tRNAs correctly. Binds to ribosomes in a GTP-dependent manner. This is Elongation factor 4 from Legionella pneumophila (strain Paris).